Here is a 174-residue protein sequence, read N- to C-terminus: Imidazole glycerol phosphate synthase subunit HisH (174 aa).

Residues 2 to 174 (SVVIINTGCA…AAVNKDNFWR (173 aa)) form the Glutamine amidotransferase type-1 domain. Cysteine 77 functions as the Nucleophile in the catalytic mechanism.

As to quaternary structure, heterodimer of HisH and HisF.

It is found in the cytoplasm. It carries out the reaction 5-[(5-phospho-1-deoxy-D-ribulos-1-ylimino)methylamino]-1-(5-phospho-beta-D-ribosyl)imidazole-4-carboxamide + L-glutamine = D-erythro-1-(imidazol-4-yl)glycerol 3-phosphate + 5-amino-1-(5-phospho-beta-D-ribosyl)imidazole-4-carboxamide + L-glutamate + H(+). It catalyses the reaction L-glutamine + H2O = L-glutamate + NH4(+). The protein operates within amino-acid biosynthesis; L-histidine biosynthesis; L-histidine from 5-phospho-alpha-D-ribose 1-diphosphate: step 5/9. IGPS catalyzes the conversion of PRFAR and glutamine to IGP, AICAR and glutamate. The HisH subunit catalyzes the hydrolysis of glutamine to glutamate and ammonia as part of the synthesis of IGP and AICAR. The resulting ammonia molecule is channeled to the active site of HisF. The sequence is that of Imidazole glycerol phosphate synthase subunit HisH (hisH) from Buchnera aphidicola subsp. Schlechtendalia chinensis.